A 927-amino-acid chain; its full sequence is DNA mismatch repair protein MutS (927 aa).

An ATP-binding site is contributed by 646-653 (GPNMAGKS). A disordered region spans residues 904 to 927 (SAQPGSAEQGESPDKHDEGKNSRG). Residues 915–927 (SPDKHDEGKNSRG) are compositionally biased toward basic and acidic residues.

Belongs to the DNA mismatch repair MutS family.

In terms of biological role, this protein is involved in the repair of mismatches in DNA. It is possible that it carries out the mismatch recognition step. This protein has a weak ATPase activity. The polypeptide is DNA mismatch repair protein MutS (Desulfovibrio desulfuricans (strain ATCC 27774 / DSM 6949 / MB)).